The following is a 189-amino-acid chain: UPF0301 protein bbp_491 (189 aa).

This sequence belongs to the UPF0301 (AlgH) family.

In Buchnera aphidicola subsp. Baizongia pistaciae (strain Bp), this protein is UPF0301 protein bbp_491.